We begin with the raw amino-acid sequence, 684 residues long: DNA gyrase subunit B, novobiocin-sensitive (684 aa).

The disordered stretch occupies residues 1 to 22 (MADSGNPNENTPSVATGENGEV). Residues 154–302 (VKTDGYRWTQ…RMLSVEIAMQ (149 aa)) are novobiocin-binding. Residues 463–577 (CEIFIVEGDS…AGHVYLSRPP (115 aa)) enclose the Toprim domain. 3 residues coordinate Mg(2+): Glu-469, Asp-542, and Asp-544.

The protein belongs to the type II topoisomerase GyrB family. In terms of assembly, heterotetramer, composed of two GyrA and two GyrB chains. In the heterotetramer, GyrA contains the active site tyrosine that forms a transient covalent intermediate with DNA, while GyrB binds cofactors and catalyzes ATP hydrolysis. It depends on Mg(2+) as a cofactor. Mn(2+) is required as a cofactor. The cofactor is Ca(2+).

It is found in the cytoplasm. It catalyses the reaction ATP-dependent breakage, passage and rejoining of double-stranded DNA.. In terms of biological role, a type II topoisomerase that negatively supercoils closed circular double-stranded (ds) DNA in an ATP-dependent manner to modulate DNA topology and maintain chromosomes in an underwound state. Negative supercoiling favors strand separation, and DNA replication, transcription, recombination and repair, all of which involve strand separation. Also able to catalyze the interconversion of other topological isomers of dsDNA rings, including catenanes and knotted rings. Type II topoisomerases break and join 2 DNA strands simultaneously in an ATP-dependent manner. In Streptomyces niveus (Streptomyces spheroides), this protein is DNA gyrase subunit B, novobiocin-sensitive.